Reading from the N-terminus, the 465-residue chain is Probable Xaa-Pro aminopeptidase PEPP (465 aa).

Residues Asp-259, Asp-270, Glu-395, and Glu-435 each contribute to the Mn(2+) site.

The protein belongs to the peptidase M24B family. Mn(2+) is required as a cofactor.

The catalysed reaction is Release of any N-terminal amino acid, including proline, that is linked to proline, even from a dipeptide or tripeptide.. Functionally, catalyzes the removal of a penultimate prolyl residue from the N-termini of peptides. The protein is Probable Xaa-Pro aminopeptidase PEPP (PEPP) of Pyricularia oryzae (strain 70-15 / ATCC MYA-4617 / FGSC 8958) (Rice blast fungus).